Consider the following 362-residue polypeptide: 3-isopropylmalate dehydrogenase (362 aa).

78–91 (GYKWDSLPPHQRPE) serves as a coordination point for NAD(+). 4 residues coordinate substrate: arginine 98, arginine 108, arginine 136, and aspartate 226. Residues aspartate 226, aspartate 250, and aspartate 254 each contribute to the Mg(2+) site. 284–296 (GSAPDIAGQDKAN) contributes to the NAD(+) binding site.

It belongs to the isocitrate and isopropylmalate dehydrogenases family. LeuB type 1 subfamily. Homodimer. The cofactor is Mg(2+). Mn(2+) is required as a cofactor.

It localises to the cytoplasm. The enzyme catalyses (2R,3S)-3-isopropylmalate + NAD(+) = 4-methyl-2-oxopentanoate + CO2 + NADH. Its pathway is amino-acid biosynthesis; L-leucine biosynthesis; L-leucine from 3-methyl-2-oxobutanoate: step 3/4. Its function is as follows. Catalyzes the oxidation of 3-carboxy-2-hydroxy-4-methylpentanoate (3-isopropylmalate) to 3-carboxy-4-methyl-2-oxopentanoate. The product decarboxylates to 4-methyl-2 oxopentanoate. This chain is 3-isopropylmalate dehydrogenase, found in Nostoc sp. (strain PCC 7120 / SAG 25.82 / UTEX 2576).